The chain runs to 92 residues: Protein OP-ORF (92 aa).

Residues 53 to 82 (KMLAATISILEEEVTELVTELNNTTNLTAK) adopt a coiled-coil conformation.

The protein is Protein OP-ORF of Rice dwarf virus (isolate Fujian) (RDV).